A 348-amino-acid polypeptide reads, in one-letter code: Uroporphyrinogen decarboxylase (348 aa).

Residues 24–28 (RQAGR), D73, Y150, S205, and H324 each bind substrate.

The protein belongs to the uroporphyrinogen decarboxylase family. In terms of assembly, homodimer.

It is found in the cytoplasm. It catalyses the reaction uroporphyrinogen III + 4 H(+) = coproporphyrinogen III + 4 CO2. It participates in porphyrin-containing compound metabolism; protoporphyrin-IX biosynthesis; coproporphyrinogen-III from 5-aminolevulinate: step 4/4. In terms of biological role, catalyzes the decarboxylation of four acetate groups of uroporphyrinogen-III to yield coproporphyrinogen-III. This Roseiflexus sp. (strain RS-1) protein is Uroporphyrinogen decarboxylase.